The chain runs to 98 residues: NADH-ubiquinone oxidoreductase chain 4L (98 aa).

3 helical membrane-spanning segments follow: residues 2–22, 29–49, and 61–81; these read SLVY…LLMF, SLLC…ILIL, and IIML…LVMV.

Belongs to the complex I subunit 4L family. As to quaternary structure, core subunit of respiratory chain NADH dehydrogenase (Complex I) which is composed of 45 different subunits.

It is found in the mitochondrion inner membrane. It catalyses the reaction a ubiquinone + NADH + 5 H(+)(in) = a ubiquinol + NAD(+) + 4 H(+)(out). In terms of biological role, core subunit of the mitochondrial membrane respiratory chain NADH dehydrogenase (Complex I) which catalyzes electron transfer from NADH through the respiratory chain, using ubiquinone as an electron acceptor. Part of the enzyme membrane arm which is embedded in the lipid bilayer and involved in proton translocation. The chain is NADH-ubiquinone oxidoreductase chain 4L (MT-ND4L) from Galemys pyrenaicus (Iberian desman).